We begin with the raw amino-acid sequence, 605 residues long: Tungsten-containing aldehyde ferredoxin oxidoreductase (605 aa).

Tungstopterin contacts are provided by Arg-76, Asn-93, Gly-95, Arg-182, Ala-183, Gly-185, and Arg-186. Positions 288, 291, and 295 each coordinate [4Fe-4S] cluster. 7 residues coordinate tungstopterin: Asp-338, Leu-342, Asp-343, Arg-444, Lys-450, Asp-489, and Leu-493. Cys-494 is a [4Fe-4S] cluster binding site. Leu-495 contacts tungstopterin.

Belongs to the AOR/FOR family. Monomer. Homodimer. [4Fe-4S] cluster serves as cofactor. The cofactor is tungstopterin.

The catalysed reaction is an aldehyde + 2 oxidized [2Fe-2S]-[ferredoxin] + H2O = a carboxylate + 2 reduced [2Fe-2S]-[ferredoxin] + 3 H(+). Its activity is regulated as follows. Inhibited by arsenite, iodoacetate and cyanide. Aldehyde ferredoxin oxidoreductase with a broad substrate specificity. Catalyzes the oxidation of a range of aliphatic aldehydes to their corresponding carboxylic acids. In vitro can use crotonaldehyde, acetaldehyde, formaldehyde, butyraldehyde or glyceraldehyde as substrate, using methyl viologen or ferredoxin, but not NAD(P), as the electron acceptor. Does not oxidize glucose or glyceraldehyde 3-phosphate. May be involved in a pyroglycolytic pathway. This is Tungsten-containing aldehyde ferredoxin oxidoreductase from Pyrococcus furiosus (strain ATCC 43587 / DSM 3638 / JCM 8422 / Vc1).